A 284-amino-acid chain; its full sequence is L-ribulose-5-phosphate 3-epimerase UlaE (284 aa).

This sequence belongs to the L-ribulose-5-phosphate 3-epimerase family.

It carries out the reaction L-ribulose 5-phosphate = L-xylulose 5-phosphate. It participates in cofactor degradation; L-ascorbate degradation; D-xylulose 5-phosphate from L-ascorbate: step 3/4. In terms of biological role, catalyzes the isomerization of L-xylulose-5-phosphate to L-ribulose-5-phosphate. Is involved in the anaerobic L-ascorbate utilization. The protein is L-ribulose-5-phosphate 3-epimerase UlaE of Salmonella choleraesuis (strain SC-B67).